Here is a 381-residue protein sequence, read N- to C-terminus: Galactose-1-phosphate uridylyltransferase (381 aa).

Zn(2+)-binding residues include Cys-65 and Cys-68. 90–91 (ND) provides a ligand contact to UDP-alpha-D-glucose. His-131 serves as a coordination point for Zn(2+). UDP-alpha-D-glucose is bound at residue Asn-175. Position 186 (His-186) interacts with Zn(2+). His-188 serves as the catalytic Tele-UMP-histidine intermediate. UDP-alpha-D-glucose is bound at residue Gln-190. Positions 204, 306, 323, and 325 each coordinate Fe cation. UDP-alpha-D-glucose contacts are provided by residues 338-341 (KFMV) and 343-344 (FE).

It belongs to the galactose-1-phosphate uridylyltransferase type 1 family. In terms of assembly, homodimer. Requires Zn(2+) as cofactor.

The enzyme catalyses alpha-D-galactose 1-phosphate + UDP-alpha-D-glucose = alpha-D-glucose 1-phosphate + UDP-alpha-D-galactose. The protein operates within carbohydrate metabolism; galactose metabolism. This Cryptococcus neoformans var. neoformans serotype D (strain B-3501A) (Filobasidiella neoformans) protein is Galactose-1-phosphate uridylyltransferase (GAL7).